A 473-amino-acid polypeptide reads, in one-letter code: Aspartyl/glutamyl-tRNA(Asn/Gln) amidotransferase subunit B (473 aa).

The protein belongs to the GatB/GatE family. GatB subfamily. In terms of assembly, heterotrimer of A, B and C subunits.

It catalyses the reaction L-glutamyl-tRNA(Gln) + L-glutamine + ATP + H2O = L-glutaminyl-tRNA(Gln) + L-glutamate + ADP + phosphate + H(+). The enzyme catalyses L-aspartyl-tRNA(Asn) + L-glutamine + ATP + H2O = L-asparaginyl-tRNA(Asn) + L-glutamate + ADP + phosphate + 2 H(+). Allows the formation of correctly charged Asn-tRNA(Asn) or Gln-tRNA(Gln) through the transamidation of misacylated Asp-tRNA(Asn) or Glu-tRNA(Gln) in organisms which lack either or both of asparaginyl-tRNA or glutaminyl-tRNA synthetases. The reaction takes place in the presence of glutamine and ATP through an activated phospho-Asp-tRNA(Asn) or phospho-Glu-tRNA(Gln). The chain is Aspartyl/glutamyl-tRNA(Asn/Gln) amidotransferase subunit B from Mycoplasmopsis synoviae (strain 53) (Mycoplasma synoviae).